Here is a 356-residue protein sequence, read N- to C-terminus: MTKHIAILRGDGIGPEIVAETVRVLDKLIAQGLDVGYEYAPLGGEAYDEYGHPYPEFTQNLCRKADAVLLGAVGSPQYDNLDRPLRPERGLLAIRKDLNLFANLRPAILYPELANASTLKSEIVAGLDILIVRELTGDIYFGEPRGIRVLENGEREGYNTMKYSESEIRRIAHVAFQSAQKRSKKVCSVGKANVLETTELWREIFEEIGKEYPDVELSHMYVDNAAMQLVRAPKQFDVIATGNIFGDILSDEASMLTGSIGMLPSASLDENGKGLYEPSHGSAPDIAGQNKANPLATVLSLAMLLRYSLNDEARAQQVENAVQKVLQQGLRTGDIYEEGTKLVSCSEMGDAVLATL.

Substrate contacts are provided by Arg-95, Arg-105, Arg-133, and Asp-223. Residues Asp-223, Asp-247, and Asp-251 each contribute to the Mg(2+) site. 281–293 is an NAD(+) binding site; it reads GSAPDIAGQNKAN.

This sequence belongs to the isocitrate and isopropylmalate dehydrogenases family. LeuB type 1 subfamily. Homodimer. Requires Mg(2+) as cofactor. Mn(2+) is required as a cofactor.

It localises to the cytoplasm. It carries out the reaction (2R,3S)-3-isopropylmalate + NAD(+) = 4-methyl-2-oxopentanoate + CO2 + NADH. The protein operates within amino-acid biosynthesis; L-leucine biosynthesis; L-leucine from 3-methyl-2-oxobutanoate: step 3/4. Functionally, catalyzes the oxidation of 3-carboxy-2-hydroxy-4-methylpentanoate (3-isopropylmalate) to 3-carboxy-4-methyl-2-oxopentanoate. The product decarboxylates to 4-methyl-2 oxopentanoate. The protein is 3-isopropylmalate dehydrogenase of Neisseria meningitidis serogroup A / serotype 4A (strain DSM 15465 / Z2491).